Here is a 261-residue protein sequence, read N- to C-terminus: Cyclin-J18-like (261 aa).

Belongs to the cyclin family.

In Oryza sativa subsp. japonica (Rice), this protein is Cyclin-J18-like.